We begin with the raw amino-acid sequence, 332 residues long: Small ribosomal subunit protein uS2 (332 aa).

This sequence belongs to the universal ribosomal protein uS2 family.

The sequence is that of Small ribosomal subunit protein uS2 from Nitrobacter hamburgensis (strain DSM 10229 / NCIMB 13809 / X14).